Reading from the N-terminus, the 125-residue chain is Antitoxin MazE5 (125 aa).

As to quaternary structure, forms a complex with cognate toxin MazF5.

Antitoxin component of a type II toxin-antitoxin (TA) system. Upon expression in M.smegmatis neutralizes the effect of cognate toxin MazF5. This is Antitoxin MazE5 (mazE5) from Mycobacterium tuberculosis (strain ATCC 25618 / H37Rv).